The primary structure comprises 193 residues: HMG-Y-related protein A (193 aa).

Positions 11–81 constitute an H15 domain; sequence PIPPYPEMIL…LKNNYFRAGA (71 aa). Positions 75-193 are disordered; sequence NYFRAGAPDA…PAVPSETAAA (119 aa). Residues 86-92 carry the Nuclear localization signal 1 (NLS) motif; that stretch reads PKRGRGR. 4 consecutive DNA-binding regions (a.T hook) follow at residues 87–98, 113–124, 138–149, and 173–184; these read KRGRGRPPKARD, GRGRGRPPKAKS, PKPRGRPPKKAK, and KRGRGRPPKVRP. Positions 145 to 149 match the Nuclear localization signal 2 (NLS) motif; the sequence is PKKAK.

It belongs to the histone H1/H5 family. In terms of processing, phosphorylated by CDK, this phosphorylation prevents DNA-binding. Motility is increased when hypophosphorylated. Acetylated.

It is found in the nucleus. It localises to the nucleolus. Binds A/T-rich DNA (e.g. present in the storage gamma-zein gene promoter) with a highly dynamic distribution into the nucleus. Probably involved in endosperm development, during cells shift from a mitotic cycle to endoreduplication leading to massive synthesis of storage proteins (zeins) and starch. The sequence is that of HMG-Y-related protein A from Zea mays (Maize).